Reading from the N-terminus, the 195-residue chain is Glycine-rich protein A3 (195 aa).

Disordered regions lie at residues 23-103 (AGGG…GVAG) and 159-182 (VMES…GSNL). A compositionally biased stretch (gly residues) spans 47–77 (PAGGGYPPQGYPPAGGGYPPQGYPPAGGGYP). The segment covering 82–94 (PPAGHHSGSSAPH) has biased composition (low complexity). Residues 163-175 (LSRESTGRARSTD) are compositionally biased toward basic and acidic residues.

This Daucus carota (Wild carrot) protein is Glycine-rich protein A3.